A 123-amino-acid polypeptide reads, in one-letter code: DNA-directed RNA polymerase I subunit RPA12 (123 aa).

Cys-17, Cys-20, Cys-35, Cys-38, Cys-84, and Cys-87 together coordinate Zn(2+). Residues 17-38 (CPDCGSVLPLPGIQDTVICSRC) form a C4-type zinc finger. Residues 80-120 (IDRRCPRCGHEGMAYHTRQMRSADEGQTVFYTCINCKFQEK) form a TFIIS-type zinc finger. The Hairpin motif lies at 103-104 (DE). Zn(2+)-binding residues include Cys-112 and Cys-115.

This sequence belongs to the archaeal RpoM/eukaryotic RPA12/RPB9/RPC11 RNA polymerase family. Component of the RNA polymerase I (Pol I) complex consisting of 13 subunits: a ten-subunit catalytic core composed of POLR1A/RPA1, POLR1B/RPA2, POLR1C/RPAC1, POLR1D/RPAC2, POLR1H/RPA12, POLR2E/RPABC1, POLR2F/RPABC2, POLR2H/RPABC3, POLR2K/RPABC4 and POLR2L/RPABC5; a mobile stalk subunit POLR1F/RPA43 protruding from the core and additional subunits homologous to general transcription factors POLR1E/RPA49 and POLR1G/RPA34. Part of Pol I pre-initiation complex (PIC), in which Pol I core assembles with RRN3 and promoter-bound UTBF and SL1/TIF-IB complex.

It is found in the nucleus. The protein resides in the nucleolus. In terms of biological role, core component of RNA polymerase I (Pol I), a DNA-dependent RNA polymerase which synthesizes ribosomal RNA precursors using the four ribonucleoside triphosphates as substrates. Can mediate Pol I proofreading of the nascent RNA transcript. Anchors into the Pol I active site to monitor transcription fidelity and cleave mis-incorporated 5'-ribonucleotides. The protein is DNA-directed RNA polymerase I subunit RPA12 of Mus musculus (Mouse).